The sequence spans 471 residues: Cysteine--tRNA ligase (471 aa).

Zn(2+) is bound at residue cysteine 29. A 'HIGH' region motif is present at residues 31-41 (PTVYDYFHIGN). Zn(2+)-binding residues include cysteine 212, histidine 237, and glutamate 241. The short motif at 269 to 273 (KMSKS) is the 'KMSKS' region element. Lysine 272 contributes to the ATP binding site.

This sequence belongs to the class-I aminoacyl-tRNA synthetase family. Monomer. Zn(2+) is required as a cofactor.

It is found in the cytoplasm. The catalysed reaction is tRNA(Cys) + L-cysteine + ATP = L-cysteinyl-tRNA(Cys) + AMP + diphosphate. This Symbiobacterium thermophilum (strain DSM 24528 / JCM 14929 / IAM 14863 / T) protein is Cysteine--tRNA ligase.